Here is a 217-residue protein sequence, read N- to C-terminus: Octanoyltransferase (217 aa).

In terms of domain architecture, BPL/LPL catalytic spans 34 to 216; it reads SETRDELWLL…AASRASRHDR (183 aa). Residues 73-80, 140-142, and 153-155 each bind substrate; these read RGGQVTWH, ALG, and GLS. The active-site Acyl-thioester intermediate is Cys171.

It belongs to the LipB family.

The protein resides in the cytoplasm. It carries out the reaction octanoyl-[ACP] + L-lysyl-[protein] = N(6)-octanoyl-L-lysyl-[protein] + holo-[ACP] + H(+). The protein operates within protein modification; protein lipoylation via endogenous pathway; protein N(6)-(lipoyl)lysine from octanoyl-[acyl-carrier-protein]: step 1/2. In terms of biological role, catalyzes the transfer of endogenously produced octanoic acid from octanoyl-acyl-carrier-protein onto the lipoyl domains of lipoate-dependent enzymes. Lipoyl-ACP can also act as a substrate although octanoyl-ACP is likely to be the physiological substrate. This chain is Octanoyltransferase, found in Halorhodospira halophila (strain DSM 244 / SL1) (Ectothiorhodospira halophila (strain DSM 244 / SL1)).